Reading from the N-terminus, the 165-residue chain is MTIKVERLLVNYKTLEEFRHFREYGAAELSMKDDLKNSIIENDSESPFYGIYYGKKLVARMSLYKIDGNFDRYFDPPQDYLELWKLEVLEPYRGRGYGRALVDFAKSFGLPVKTNARQSTGEFWNKLGFEPITYNEARDRGESPYVWFPQGVQEQTTKPEQARAE.

In terms of domain architecture, N-acetyltransferase spans 8-159 (LLVNYKTLEE…QGVQEQTTKP (152 aa)).

This is an uncharacterized protein from Shouchella clausii (strain KSM-K16) (Alkalihalobacillus clausii).